The primary structure comprises 171 residues: Small ribosomal subunit protein bS16 (171 aa).

Residues 114–171 are disordered; the sequence is EGGPTTEAAKPKKKAATSGAKKAAKAAEPEAAASEAAEPEAAAAPAEGGEQAESSAES. Low complexity predominate over residues 142 to 171; it reads PEAAASEAAEPEAAAAPAEGGEQAESSAES.

Belongs to the bacterial ribosomal protein bS16 family.

This Mycolicibacterium paratuberculosis (strain ATCC BAA-968 / K-10) (Mycobacterium paratuberculosis) protein is Small ribosomal subunit protein bS16.